An 86-amino-acid chain; its full sequence is Defensin-like SRCA-homolog protein (86 aa).

The N-terminal stretch at 1–26 (MRCVVLFMVSCLLIVLLINHFEEVEA) is a signal peptide. 4 disulfide bridges follow: cysteine 32-cysteine 84, cysteine 42-cysteine 70, cysteine 52-cysteine 79, and cysteine 68-cysteine 81.

The protein belongs to the DEFL family.

Its subcellular location is the secreted. In terms of biological role, involved in male-mediated self-incompatibility. The protein is Defensin-like SRCA-homolog protein (SCR37) of Arabidopsis lyrata (Lyre-leaved rock-cress).